A 407-amino-acid polypeptide reads, in one-letter code: Argininosuccinate synthase (407 aa).

ATP is bound by residues 16–24 (AYSGGLDTS) and Ala-44. Residues Tyr-96 and Ser-101 each coordinate L-citrulline. Gly-126 is a binding site for ATP. Thr-128, Asn-132, and Asp-133 together coordinate L-aspartate. Asn-132 lines the L-citrulline pocket. 5 residues coordinate L-citrulline: Arg-136, Ser-185, Ser-194, Glu-270, and Tyr-282.

Belongs to the argininosuccinate synthase family. Type 1 subfamily. Homotetramer.

Its subcellular location is the cytoplasm. The enzyme catalyses L-citrulline + L-aspartate + ATP = 2-(N(omega)-L-arginino)succinate + AMP + diphosphate + H(+). The protein operates within amino-acid biosynthesis; L-arginine biosynthesis; L-arginine from L-ornithine and carbamoyl phosphate: step 2/3. The chain is Argininosuccinate synthase from Shewanella sp. (strain ANA-3).